A 317-amino-acid polypeptide reads, in one-letter code: MAARTLASALVLTLWVWALAPAGAVDAMGPHAAVRLAELLTPEECGHFRSLLEAPEPDVEAELSRLSEDRLARPEPLNTTSGSPSRRRRREAAEDPAGRVAGPGEVSDGCREALAAWLAPQAASLSWDRLARALRRSGRPDVARELGKNLHQQATLQLRKFGQRFLPRPGAAARVPFAPAPRPRRAAVPAPDWDALQLIVERLPQPLYERSPMGWAGPLALGLLTGFVGALGTGALVVLLTLWITGGDGDRASPGSPGPLATVQGWWETKLLLPKERRAPPGAWAADGPDSPSPHSALALSCKMGAQSWGSGALDGL.

A signal peptide spans 1–27; it reads MAARTLASALVLTLWVWALAPAGAVDA. The Extracellular segment spans residues 28 to 218; sequence MGPHAAVRLA…ERSPMGWAGP (191 aa). Over residues 62 to 73 the composition is skewed to basic and acidic residues; that stretch reads ELSRLSEDRLAR. Residues 62-106 form a disordered region; the sequence is ELSRLSEDRLARPEPLNTTSGSPSRRRRREAAEDPAGRVAGPGEV. Positions 66–150 constitute a Death domain; sequence LSEDRLARPE…DVARELGKNL (85 aa). A glycan (N-linked (GlcNAc...) asparagine) is linked at asparagine 78. A helical membrane pass occupies residues 219–239; sequence LALGLLTGFVGALGTGALVVL. The Cytoplasmic segment spans residues 240-317; it reads LTLWITGGDG…SWGSGALDGL (78 aa).

Its subcellular location is the membrane. This is Transmembrane and death domain protein 1 from Homo sapiens (Human).